A 118-amino-acid polypeptide reads, in one-letter code: Large ribosomal subunit protein bL20 (118 aa).

The protein belongs to the bacterial ribosomal protein bL20 family.

In terms of biological role, binds directly to 23S ribosomal RNA and is necessary for the in vitro assembly process of the 50S ribosomal subunit. It is not involved in the protein synthesizing functions of that subunit. The polypeptide is Large ribosomal subunit protein bL20 (Pseudoalteromonas atlantica (strain T6c / ATCC BAA-1087)).